The sequence spans 181 residues: MSIEQLKEQIPDFAKDVRLNLSSMASDESLSPQAKYGLFVACAIATRNPTVTAALEAVAAAHLSAAALTAAKTAAALMAMNNVYYRFVHLATNKEYATMPARLRMNAIANPGVDKADFELWSLAVSAINGCGTCIDAHERVLKEAGVSAASIQTAVRFAAIIQSVAVAIEAAAVTVPLAAE.

Residue cysteine 131 is the Proton donor of the active site. Cysteine 131 and cysteine 134 are joined by a disulfide. The active-site Cysteine sulfenic acid (-SOH) intermediate is cysteine 134.

This sequence belongs to the AhpD family.

It catalyses the reaction N(6)-[(R)-dihydrolipoyl]-L-lysyl-[lipoyl-carrier protein] + a hydroperoxide = N(6)-[(R)-lipoyl]-L-lysyl-[lipoyl-carrier protein] + an alcohol + H2O. Antioxidant protein with alkyl hydroperoxidase activity. Required for the reduction of the AhpC active site cysteine residues and for the regeneration of the AhpC enzyme activity. The polypeptide is Alkyl hydroperoxide reductase AhpD (Bradyrhizobium sp. (strain BTAi1 / ATCC BAA-1182)).